A 286-amino-acid polypeptide reads, in one-letter code: 4-diphosphocytidyl-2-C-methyl-D-erythritol kinase (286 aa).

The active site involves lysine 11. ATP is bound at residue proline 93 to serine 103. The active site involves aspartate 135.

This sequence belongs to the GHMP kinase family. IspE subfamily.

It catalyses the reaction 4-CDP-2-C-methyl-D-erythritol + ATP = 4-CDP-2-C-methyl-D-erythritol 2-phosphate + ADP + H(+). It functions in the pathway isoprenoid biosynthesis; isopentenyl diphosphate biosynthesis via DXP pathway; isopentenyl diphosphate from 1-deoxy-D-xylulose 5-phosphate: step 3/6. In terms of biological role, catalyzes the phosphorylation of the position 2 hydroxy group of 4-diphosphocytidyl-2C-methyl-D-erythritol. The polypeptide is 4-diphosphocytidyl-2-C-methyl-D-erythritol kinase (Chlorobium phaeobacteroides (strain BS1)).